The following is a 225-amino-acid chain: MLPARPEPLPVDPKTTAVIVIDMQNAYASPGGYLDLAGFDISGAAKVTHEIKGVLEVARSAGMTVIYFQNGWDDGYVEAGGPGSPNWWKSNALKTMRARPELQGKLLARGQWDYELVDDLTPQPGDIRLHKTRYSGFFNSQLDSVLRARGIRHLVFTGIATNVCVESTLRDGFMLEYFGTVLEDATHQAGPDFVQKAALFNIETFFGWVSTTADFKGTFGQLAPG.

The active-site Proton acceptor is Asp-22. Residue Lys-131 is part of the active site. The active-site Nucleophile is the Cys-164.

The protein belongs to the isochorismatase family. RutB subfamily.

The enzyme catalyses (Z)-3-ureidoacrylate + H2O + H(+) = (Z)-3-aminoacrylate + NH4(+) + CO2. The catalysed reaction is (Z)-3-ureidoacrylate + H2O = (Z)-3-aminoacrylate + carbamate + H(+). It catalyses the reaction (Z)-2-methylureidoacrylate + H2O + H(+) = (Z)-2-methylaminoacrylate + NH4(+) + CO2. Hydrolyzes ureidoacrylate to form aminoacrylate and carbamate. The carbamate hydrolyzes spontaneously, thereby releasing one of the nitrogen atoms of the pyrimidine ring as ammonia and one of its carbon atoms as CO2. The polypeptide is Ureidoacrylate amidohydrolase RutB (Caulobacter vibrioides (strain ATCC 19089 / CIP 103742 / CB 15) (Caulobacter crescentus)).